A 125-amino-acid polypeptide reads, in one-letter code: Small ribosomal subunit protein uS13 (125 aa).

The disordered stretch occupies residues 93 to 125 (RKGLPVRGQRTKTNARTRKGPKRTVAGKKKAGR).

It belongs to the universal ribosomal protein uS13 family. Part of the 30S ribosomal subunit. Forms a loose heterodimer with protein S19. Forms two bridges to the 50S subunit in the 70S ribosome.

Its function is as follows. Located at the top of the head of the 30S subunit, it contacts several helices of the 16S rRNA. In the 70S ribosome it contacts the 23S rRNA (bridge B1a) and protein L5 of the 50S subunit (bridge B1b), connecting the 2 subunits; these bridges are implicated in subunit movement. Contacts the tRNAs in the A and P-sites. In Arthrobacter sp. (strain FB24), this protein is Small ribosomal subunit protein uS13.